The primary structure comprises 73 residues: Aminopeptidase G (73 aa).

The segment at 39–73 is disordered; that stretch reads GRRAASSSWPGRGSSRRWRPGRRTGAAARGCWRAP. 2 stretches are compositionally biased toward low complexity: residues 42–51 and 61–73; these read AASSSWPGRG and RTGA…WRAP.

It belongs to the peptidase M1 family. The cofactor is Zn(2+).

The protein resides in the cytoplasm. Functionally, hydrolyzes preferentially the N-terminal glycine and can also hydrolyze other amino acids which are used by PepN but is unable to hydrolyze basic amino acids. The chain is Aminopeptidase G (pepG) from Streptomyces lividans.